We begin with the raw amino-acid sequence, 522 residues long: Tetratricopeptide repeat and J domain-containing co-chaperone DNJ1 (522 aa).

A signal peptide spans 1 to 22; the sequence is MKGFLLVALPVLFLSLSTQVFG. 7 TPR repeats span residues 29–62, 63–96, 97–130, 142–175, 210–243, 256–289, and 356–389; these read AAQI…DPTG, YANY…NPGF, VQAH…KSDS, GEAA…GPNS, TYLP…DPDS, LEKD…LVRF, and VDSW…SGRS. The 62-residue stretch at 410–471 folds into the J domain; it reads DYYKVLGVPR…ELRQRYDNGD (62 aa). The disordered stretch occupies residues 465–494; that stretch reads QRYDNGDDPNDPTGGQQHNPFAHHGGGMPF.

It localises to the endoplasmic reticulum lumen. In terms of biological role, endoplasmic reticulum co-chaperone crucial for survival and virulence factor production at elevated temperatures representative of febrile patients during infection. Contributes to virulence in a mouse model of cryptococcosis. With chaperone CNE1, coordinately maintains ER homeostasis and contributes to maintenance of cell wall architecture. This Cryptococcus neoformans var. grubii serotype A (strain H99 / ATCC 208821 / CBS 10515 / FGSC 9487) (Filobasidiella neoformans var. grubii) protein is Tetratricopeptide repeat and J domain-containing co-chaperone DNJ1.